Reading from the N-terminus, the 171-residue chain is Lipoprotein signal peptidase (171 aa).

Helical transmembrane passes span 8-28 (SFLWLSAVAFVVDLLTKYIVV), 64-84 (WQQYFFILLALAISGMLVYFL), and 99-119 (ALIIGGALANMVDRAYNGFVV). Active-site residues include aspartate 120 and aspartate 138. Residues 133 to 153 (VFNIADIAICIGAGLLALDAF) traverse the membrane as a helical segment.

The protein belongs to the peptidase A8 family.

The protein resides in the cell inner membrane. It carries out the reaction Release of signal peptides from bacterial membrane prolipoproteins. Hydrolyzes -Xaa-Yaa-Zaa-|-(S,diacylglyceryl)Cys-, in which Xaa is hydrophobic (preferably Leu), and Yaa (Ala or Ser) and Zaa (Gly or Ala) have small, neutral side chains.. The protein operates within protein modification; lipoprotein biosynthesis (signal peptide cleavage). In terms of biological role, this protein specifically catalyzes the removal of signal peptides from prolipoproteins. This Haemophilus influenzae (strain PittGG) protein is Lipoprotein signal peptidase.